The sequence spans 75 residues: Sec-independent protein translocase protein TatA (75 aa).

Residues methionine 1 to glycine 21 form a helical membrane-spanning segment. The disordered stretch occupies residues aspartate 47–alanine 75. A compositionally biased stretch (basic and acidic residues) spans lysine 53–alanine 75.

It belongs to the TatA/E family. As to quaternary structure, the Tat system comprises two distinct complexes: a TatABC complex, containing multiple copies of TatA, TatB and TatC subunits, and a separate TatA complex, containing only TatA subunits. Substrates initially bind to the TatABC complex, which probably triggers association of the separate TatA complex to form the active translocon.

The protein resides in the cell inner membrane. In terms of biological role, part of the twin-arginine translocation (Tat) system that transports large folded proteins containing a characteristic twin-arginine motif in their signal peptide across membranes. TatA could form the protein-conducting channel of the Tat system. This Sulfurovum sp. (strain NBC37-1) protein is Sec-independent protein translocase protein TatA.